Reading from the N-terminus, the 469-residue chain is Neuraminidase (469 aa).

Residues methionine 1–threonine 9 lie on the Intravirion side of the membrane. A helical membrane pass occupies residues isoleucine 10–valine 30. The tract at residues glycine 11–valine 33 is involved in apical transport and lipid raft association. Residues threonine 31–isoleucine 469 are Virion surface-facing. The tract at residues histidine 36 to serine 88 is hypervariable stalk region. 3 N-linked (GlcNAc...) asparagine; by host glycosylation sites follow: asparagine 61, asparagine 70, and asparagine 86. The interval glutamine 91–isoleucine 469 is head of neuraminidase. Disulfide bonds link cysteine 92/cysteine 417, cysteine 124/cysteine 129, cysteine 183/cysteine 230, cysteine 232/cysteine 237, cysteine 278/cysteine 291, cysteine 280/cysteine 289, cysteine 318/cysteine 337, and cysteine 421/cysteine 447. Arginine 118 contacts substrate. Asparagine 146 carries N-linked (GlcNAc...) asparagine; by host glycosylation. The active-site Proton donor/acceptor is the aspartate 151. Arginine 152 is a binding site for substrate. N-linked (GlcNAc...) asparagine; by host glycosylation is found at asparagine 200 and asparagine 234. Glutamate 276–glutamate 277 contacts substrate. Arginine 292 is a binding site for substrate. Ca(2+) contacts are provided by aspartate 293, glycine 297, and aspartate 324. Residue arginine 371 coordinates substrate. The N-linked (GlcNAc...) asparagine; by host glycan is linked to asparagine 402. Tyrosine 406 functions as the Nucleophile in the catalytic mechanism.

Belongs to the glycosyl hydrolase 34 family. In terms of assembly, homotetramer. Requires Ca(2+) as cofactor. N-glycosylated.

It is found in the virion membrane. Its subcellular location is the host apical cell membrane. The enzyme catalyses Hydrolysis of alpha-(2-&gt;3)-, alpha-(2-&gt;6)-, alpha-(2-&gt;8)- glycosidic linkages of terminal sialic acid residues in oligosaccharides, glycoproteins, glycolipids, colominic acid and synthetic substrates.. Inhibited by the neuraminidase inhibitors zanamivir (Relenza) and oseltamivir (Tamiflu). These drugs interfere with the release of progeny virus from infected cells and are effective against all influenza strains. Resistance to neuraminidase inhibitors is quite rare. Its function is as follows. Catalyzes the removal of terminal sialic acid residues from viral and cellular glycoconjugates. Cleaves off the terminal sialic acids on the glycosylated HA during virus budding to facilitate virus release. Additionally helps virus spread through the circulation by further removing sialic acids from the cell surface. These cleavages prevent self-aggregation and ensure the efficient spread of the progeny virus from cell to cell. Otherwise, infection would be limited to one round of replication. Described as a receptor-destroying enzyme because it cleaves a terminal sialic acid from the cellular receptors. May facilitate viral invasion of the upper airways by cleaving the sialic acid moieties on the mucin of the airway epithelial cells. Likely to plays a role in the budding process through its association with lipid rafts during intracellular transport. May additionally display a raft-association independent effect on budding. Plays a role in the determination of host range restriction on replication and virulence. Sialidase activity in late endosome/lysosome traffic seems to enhance virus replication. This Aves (whales) protein is Neuraminidase.